We begin with the raw amino-acid sequence, 342 residues long: Aquaporin-7 (342 aa).

Residues 1–36 (MVQTSRHRRSTRGSKMVSWSVMAKIQEILQKKMVRE) lie on the Cytoplasmic side of the membrane. Ser20 is subject to Phosphoserine. Residues 37–54 (FLAEFMSTYVMMVFGLGS) traverse the membrane as a helical segment. Residues 55 to 67 (VAHMVLNKKYGSY) are Extracellular-facing. The chain crosses the membrane as a helical span at residues 68–85 (LGVNLGFGFGVTMGVHVA). Topologically, residues 86–89 (GHIS) are cytoplasmic. The segment at residues 90–103 (GAHMNAAVTFANCA) is an intramembrane region (discontinuously helical). Residues 94–96 (NAA) carry the NPA 1 motif. The Cytoplasmic segment spans residues 104-111 (LGRVPWRK). The helical transmembrane segment at 112–132 (FPVYVLGQFLGSFLAAATIYT) threads the bilayer. Over 133–167 (LFYTAILHFSGGQLMVTGPVATAGIFATYLPDHMT) the chain is Extracellular. A helical membrane pass occupies residues 168–188 (LWRGFLNEAWLTGMLQLCLFA). The Cytoplasmic segment spans residues 189–200 (ITDQENNAALPG). Residues 201 to 217 (TQALVIGILVVIIGVSL) traverse the membrane as a helical segment. Residues 218–221 (GMNT) lie on the Extracellular side of the membrane. Positions 222 to 235 (GYAINPSRDLPPRV) form an intramembrane region, discontinuously helical. The NPA 2 motif lies at 226–228 (NPS). The Extracellular portion of the chain corresponds to 236 to 253 (FTFIAGWGKEVFSEGENW). A helical membrane pass occupies residues 254–275 (WWVPVVAPLLGACLGGIIYLVF). The Cytoplasmic segment spans residues 276-342 (IGSTTPREPL…LHESMALGHF (67 aa)).

This sequence belongs to the MIP/aquaporin (TC 1.A.8) family. As to quaternary structure, homotetramer; each monomer provides an independent glycerol/water pore. Two homotetramers on opposing membranes can dimerize, forming a cell-cell junction. Interacts with PLIN1. Post-translationally, phosphorylation by PKA could prevent the interaction with PLIN1.

The protein resides in the cell membrane. Its subcellular location is the cytoplasmic vesicle membrane. The protein localises to the lipid droplet. The catalysed reaction is glycerol(in) = glycerol(out). It carries out the reaction H2O(in) = H2O(out). It catalyses the reaction urea(in) = urea(out). With respect to regulation, glycerol transport is regulated by pH, with the porin being permeable to glycerol at pH 7.4 but not at pH 5.5. Water permeability, however, is not influenced by pH. In terms of biological role, aquaglyceroporins form homotetrameric transmembrane channels, with each monomer independently mediating glycerol and water transport across the plasma membrane along their osmotic gradient. Could also be permeable to urea. Mediates the efflux of glycerol, formed upon triglyceride hydrolysis, to avoid its accumulation in adipocytes and to make it available to other tissues. In the kidney, mediates the reabsorption of glycerol, preventing its loss in urine, again participating to energy homeostasis. In pancreatic beta cells, it also mediates the efflux of glycerol, regulating its intracellular levels. The chain is Aquaporin-7 (AQP7) from Macaca fascicularis (Crab-eating macaque).